A 206-amino-acid polypeptide reads, in one-letter code: Small ribosomal subunit protein uS4 (206 aa).

The S4 RNA-binding domain maps to 96-157; sequence SRLDNVVYRM…KAKKQVRIQE (62 aa).

The protein belongs to the universal ribosomal protein uS4 family. As to quaternary structure, part of the 30S ribosomal subunit. Contacts protein S5. The interaction surface between S4 and S5 is involved in control of translational fidelity.

Functionally, one of the primary rRNA binding proteins, it binds directly to 16S rRNA where it nucleates assembly of the body of the 30S subunit. With S5 and S12 plays an important role in translational accuracy. The sequence is that of Small ribosomal subunit protein uS4 from Neisseria gonorrhoeae (strain ATCC 700825 / FA 1090).